Reading from the N-terminus, the 159-residue chain is Ribosomal RNA large subunit methyltransferase H (159 aa).

S-adenosyl-L-methionine-binding positions include Leu76, Gly108, and 127-132 (FSKMTL).

This sequence belongs to the RNA methyltransferase RlmH family. Homodimer.

It is found in the cytoplasm. The enzyme catalyses pseudouridine(1915) in 23S rRNA + S-adenosyl-L-methionine = N(3)-methylpseudouridine(1915) in 23S rRNA + S-adenosyl-L-homocysteine + H(+). Specifically methylates the pseudouridine at position 1915 (m3Psi1915) in 23S rRNA. The polypeptide is Ribosomal RNA large subunit methyltransferase H (Bacillus cereus (strain ATCC 10987 / NRS 248)).